Reading from the N-terminus, the 223-residue chain is Riboflavin kinase (223 aa).

The unknown stretch occupies residues 1–89; that stretch reads MHRINALKHL…KHIFCGDEDK (89 aa). The tract at residues 90-223 is riboflavin kinase; that stretch reads VELYGNVITG…IMIEDRSACE (134 aa). Residue 99–104 coordinates CDP; the sequence is GLGEGQ. Mg(2+) is bound by residues Thr-128 and Asn-130. FMN is bound by residues Ser-185 and Glu-193. A CDP-binding site is contributed by 198-201; that stretch reads VHLR.

Belongs to the archaeal riboflavin kinase family. Mg(2+) is required as a cofactor.

It carries out the reaction riboflavin + CTP = CDP + FMN + H(+). It functions in the pathway cofactor biosynthesis; FMN biosynthesis; FMN from riboflavin (CTP route): step 1/1. Catalyzes the CTP-dependent phosphorylation of riboflavin (vitamin B2) to form flavin mononucleotide (FMN). The sequence is that of Riboflavin kinase (ribK) from Methanococcoides burtonii (strain DSM 6242 / NBRC 107633 / OCM 468 / ACE-M).